A 201-amino-acid chain; its full sequence is 3-isopropylmalate dehydratase small subunit (201 aa).

Belongs to the LeuD family. LeuD type 1 subfamily. As to quaternary structure, heterodimer of LeuC and LeuD.

The enzyme catalyses (2R,3S)-3-isopropylmalate = (2S)-2-isopropylmalate. The protein operates within amino-acid biosynthesis; L-leucine biosynthesis; L-leucine from 3-methyl-2-oxobutanoate: step 2/4. In terms of biological role, catalyzes the isomerization between 2-isopropylmalate and 3-isopropylmalate, via the formation of 2-isopropylmaleate. This chain is 3-isopropylmalate dehydratase small subunit, found in Brucella anthropi (strain ATCC 49188 / DSM 6882 / CCUG 24695 / JCM 21032 / LMG 3331 / NBRC 15819 / NCTC 12168 / Alc 37) (Ochrobactrum anthropi).